Consider the following 350-residue polypeptide: Glycogenin-1 (350 aa).

T2 is modified (N-acetylthreonine). L9, T11, N12, and Y15 together coordinate UDP. Residues L9, T11, N12, and Y15 each coordinate UDP-alpha-D-glucose. The residue at position 44 (S44) is a Phosphoserine. R77 contacts UDP. Residues R77, K86, D102, A103, D104, N133, S134, D160, D163, and Q164 each contribute to the UDP-alpha-D-glucose site. 3 residues coordinate UDP: D102, A103, and D104. D102 contacts Mn(2+). A Mn(2+)-binding site is contributed by D104. O-linked (Glc...) tyrosine glycosylation occurs at Y195. H212, G215, and K218 together coordinate UDP. A Mn(2+)-binding site is contributed by H212. 2 residues coordinate UDP-alpha-D-glucose: G215 and K218. The interval 301 to 333 (SHLSLGEIPAMAQPFVSSEERKERWEQGQADYM) is interaction with GYS1.

Belongs to the glycosyltransferase 8 family. Glycogenin subfamily. In terms of assembly, part of the GYS1-GYG1 complex, a heterooctamer composed of a tetramer of GYS1 and 2 dimers of GYG1, where each GYS1 protomer binds to one GYG1 subunit (via GYG1 C-terminus); the GYS1 tetramer may dissociate from GYG1 dimers to continue glycogen polymerization on its own. May also form a heterooctamer complex with GYS2 (via GYG1 C-terminus). It depends on Mn(2+) as a cofactor. Self-glycosylated by the transfer of glucose residues from UDP-glucose to itself, forming an alpha-1,4-glycan of around 10 residues attached to Tyr-195. In terms of processing, phosphorylated. In terms of tissue distribution, highly expressed in skeletal muscle and heart, with lower levels in brain, lung, kidney and pancreas.

Its subcellular location is the cytoplasm. The protein localises to the nucleus. It catalyses the reaction L-tyrosyl-[glycogenin] + UDP-alpha-D-glucose = alpha-D-glucosyl-L-tyrosyl-[glycogenin] + UDP + H(+). The catalysed reaction is [1,4-alpha-D-glucosyl](n)-L-tyrosyl-[glycogenin] + UDP-alpha-D-glucose = [1,4-alpha-D-glucosyl](n+1)-L-tyrosyl-[glycogenin] + UDP + H(+). It participates in glycan biosynthesis; glycogen biosynthesis. Its activity is regulated as follows. Inhibited by palladium ions. Glycogenin participates in the glycogen biosynthetic process along with glycogen synthase and glycogen branching enzyme. It catalyzes the formation of a short alpha (1,4)-glucosyl chain covalently attached via a glucose 1-O-tyrosyl linkage to internal tyrosine residues and these chains act as primers for the elongation reaction catalyzed by glycogen synthase. The polypeptide is Glycogenin-1 (Homo sapiens (Human)).